A 150-amino-acid chain; its full sequence is Large ribosomal subunit protein bL9 (150 aa).

Belongs to the bacterial ribosomal protein bL9 family.

Binds to the 23S rRNA. This chain is Large ribosomal subunit protein bL9, found in Lactococcus lactis subsp. cremoris (strain MG1363).